A 184-amino-acid polypeptide reads, in one-letter code: Ribosome maturation factor RimM (184 aa).

Residues 101–174 (PDEYYDHQLV…RVVIADRPGL (74 aa)) form the PRC barrel domain.

Belongs to the RimM family. In terms of assembly, binds ribosomal protein uS19.

It is found in the cytoplasm. An accessory protein needed during the final step in the assembly of 30S ribosomal subunit, possibly for assembly of the head region. Essential for efficient processing of 16S rRNA. May be needed both before and after RbfA during the maturation of 16S rRNA. It has affinity for free ribosomal 30S subunits but not for 70S ribosomes. The chain is Ribosome maturation factor RimM from Nocardioides sp. (strain ATCC BAA-499 / JS614).